The following is a 3704-amino-acid chain: Fatty acid synthase 2 (3704 aa).

A compositionally biased stretch (low complexity) spans 27-41 (AVSAHGSPPSSASPG). Residues 27–52 (AVSAHGSPPSSASPGPDDKAFSVDGT) form a disordered region. The segment at 216–475 (ALFGGQGNNH…QARIPFSKRK (260 aa)) is acetyltransferase (AT) domain. The enoyl reductase (ER) domain stretch occupies residues 639–887 (SRLLGKPPIM…LIASTQGCSD (249 aa)). The dehydratase (DH) domain stretch occupies residues 1216-1709 (GEQPSWIRAL…VPGDQLSVQL (494 aa)). The MaoC-like domain occupies 1624-1730 (PKTNEPYSRA…VQIDASNQRG (107 aa)). Residues 1747-2112 (YVFTGQGSQA…IEHVSEVTRS (366 aa)) are malonyl/palmitoyl transferase (MT/PT) domain. The Carrier domain maps to 2265 to 2343 (DERLDPLLTV…AALRPGYSGE (79 aa)). Serine 2303 carries the O-(pantetheine 4'-phosphoryl)serine modification. The interval 2733–2969 (GLDVLLTGVG…LGLVEPEFAS (237 aa)) is ketoreductase (KR) domain. The Ketosynthase family 3 (KS3) domain maps to 3176 to 3623 (QQEIELTHDL…QVGGIAMILH (448 aa)). Active-site for beta-ketoacyl synthase activity residues include cysteine 3359, histidine 3506, and histidine 3547.

The protein in the N-terminal section; belongs to the fungal fatty acid synthetase subunit beta family. In the C-terminal section; belongs to the thiolase-like superfamily. Fungal fatty acid synthetase subunit alpha family.

It participates in secondary metabolite biosynthesis. Functionally, fatty acid synthase; part of the gene cluster that mediates the biosynthesis of the glycolipid biosurfactant ustilagic acid (UA). UA is a secreted cellobiose glycolipid that is toxic for many microorganisms and confers biocontrol activity to U.maydis. UA consists of 15,16-dihydroxypalmitic or 2,15,16-trihydroxypalmitic acid, which is O-glycosidically linked to cellobiose at its terminal hydroxyl group. In addition, the cellobiose moiety is acetylated and acylated with a short-chain hydroxy fatty acid. UA biosynthesis starts with omega-hydroxylation of palmitic acid catalyzed by the cytochrome P450 monooxygenase cyp1. Terminal hydroxylation of palmitic acid precedes subterminal hydroxylation catalyzed by the cytochrome P450 monooxygenase cyp2. Sequential glucosylation of the hydroxy fatty acid is probably catalyzed by the glycosyltransferase ugt1. The cellobiose lipid is further decorated by acetylation of the proximal glucose residue and by acylation with a short-chain beta-hydroxy fatty acid at the distal glucose residue. The acyltransferase uat1 may be a good candidate for catalyzing either acetylation or acylation of the cellobiose lipid. The fatty acid synthase fas2 may be involved in synthesis of the carbon backbone of the short-chain beta-hydroxy fatty acid esterified to the cellobiose disaccharide. The secreted UA consists of a mixture of both alpha-hydroxylated and non-hydroxylated glycolipids; therefore, alpha-hydroxylation of the long-chain fatty, catalyzed by the fatty acid hydroxylase ahd1, occurs late in UA biosynthesis and may be the last step before secretion. The sequence is that of Fatty acid synthase 2 from Mycosarcoma maydis (Corn smut fungus).